Reading from the N-terminus, the 392-residue chain is Formate-dependent phosphoribosylglycinamide formyltransferase (392 aa).

N(1)-(5-phospho-beta-D-ribosyl)glycinamide contacts are provided by residues 22–23 (EL) and glutamate 82. ATP-binding positions include arginine 114, lysine 155, 160 to 165 (SSGKGQ), 195 to 198 (EGVV), and glutamate 203. One can recognise an ATP-grasp domain in the interval 119 to 308 (RLAAEELGLP…EFALHVRAFL (190 aa)). Mg(2+) contacts are provided by glutamate 267 and glutamate 279. Residues aspartate 286, lysine 355, and 362 to 363 (RR) contribute to the N(1)-(5-phospho-beta-D-ribosyl)glycinamide site.

The protein belongs to the PurK/PurT family. Homodimer.

The enzyme catalyses N(1)-(5-phospho-beta-D-ribosyl)glycinamide + formate + ATP = N(2)-formyl-N(1)-(5-phospho-beta-D-ribosyl)glycinamide + ADP + phosphate + H(+). Its pathway is purine metabolism; IMP biosynthesis via de novo pathway; N(2)-formyl-N(1)-(5-phospho-D-ribosyl)glycinamide from N(1)-(5-phospho-D-ribosyl)glycinamide (formate route): step 1/1. In terms of biological role, involved in the de novo purine biosynthesis. Catalyzes the transfer of formate to 5-phospho-ribosyl-glycinamide (GAR), producing 5-phospho-ribosyl-N-formylglycinamide (FGAR). Formate is provided by PurU via hydrolysis of 10-formyl-tetrahydrofolate. This Salmonella arizonae (strain ATCC BAA-731 / CDC346-86 / RSK2980) protein is Formate-dependent phosphoribosylglycinamide formyltransferase.